The following is a 109-amino-acid chain: Protein NATD1 (109 aa).

Positions 18–108 (EHDRKRRQFS…PLPQYLERLQ (91 aa)) constitute an N-acetyltransferase domain.

It belongs to the NATD1 family.

The protein is Protein NATD1 (natd1) of Xenopus tropicalis (Western clawed frog).